A 92-amino-acid polypeptide reads, in one-letter code: Cell division protein FtsL (92 aa).

The Cytoplasmic portion of the chain corresponds to 1 to 3; that stretch reads MGR. A helical membrane pass occupies residues 4-21; it reads ISLIVAALLMLSAISLVT. The Periplasmic segment spans residues 22–92; sequence SRYQSRQLFI…YMNQPAGGAQ (71 aa).

Belongs to the FtsL family. Part of a complex composed of FtsB, FtsL and FtsQ.

Its subcellular location is the cell inner membrane. Essential cell division protein. May link together the upstream cell division proteins, which are predominantly cytoplasmic, with the downstream cell division proteins, which are predominantly periplasmic. This chain is Cell division protein FtsL, found in Bordetella pertussis (strain Tohama I / ATCC BAA-589 / NCTC 13251).